A 451-amino-acid chain; its full sequence is Adenylyltransferase and sulfurtransferase MOCS3 (451 aa).

Residues 42 to 62 (GEDSDEAEESSNDMPTPQTKL) are disordered. Residues 43–52 (EDSDEAEESS) show a composition bias toward acidic residues. Phosphothreonine is present on Thr60. Residues Gly99, Asp120, 127–131 (SNLHR), Lys144, and 188–189 (DN) contribute to the ATP site. Residues Cys229 and Cys232 each coordinate Zn(2+). Cys246 acts as the Glycyl thioester intermediate; for adenylyltransferase activity in catalysis. 2 residues coordinate Zn(2+): Cys304 and Cys307. In terms of domain architecture, Rhodanese spans 353–449 (QSQPHLLLDV…WTGSVDATFP (97 aa)). Cys408 (cysteine persulfide intermediate; for sulfurtransferase activity) is an active-site residue.

The protein in the N-terminal section; belongs to the HesA/MoeB/ThiF family. UBA4 subfamily. It depends on Zn(2+) as a cofactor.

Its subcellular location is the cytoplasm. It is found in the cytosol. The enzyme catalyses [molybdopterin-synthase sulfur-carrier protein]-C-terminal Gly-Gly + ATP + H(+) = [molybdopterin-synthase sulfur-carrier protein]-C-terminal Gly-Gly-AMP + diphosphate. The catalysed reaction is [molybdopterin-synthase sulfur-carrier protein]-C-terminal Gly-Gly-AMP + S-sulfanyl-L-cysteinyl-[cysteine desulfurase] + AH2 = [molybdopterin-synthase sulfur-carrier protein]-C-terminal-Gly-aminoethanethioate + L-cysteinyl-[cysteine desulfurase] + A + AMP + 2 H(+). It participates in tRNA modification; 5-methoxycarbonylmethyl-2-thiouridine-tRNA biosynthesis. It functions in the pathway cofactor biosynthesis; molybdopterin biosynthesis. Plays a central role in 2-thiolation of mcm(5)S(2)U at tRNA wobble positions of cytosolic tRNA(Lys), tRNA(Glu) and tRNA(Gln). Also essential during biosynthesis of the molybdenum cofactor. Acts by mediating the C-terminal thiocarboxylation of sulfur carriers URM1 and MOCS2A. Its N-terminus first activates URM1 and MOCS2A as acyl-adenylates (-COAMP), then the persulfide sulfur on the catalytic cysteine is transferred to URM1 and MOCS2A to form thiocarboxylation (-COSH) of their C-terminus. The reaction probably involves hydrogen sulfide that is generated from the persulfide intermediate and that acts as a nucleophile towards URM1 and MOCS2A. Subsequently, a transient disulfide bond is formed. Does not use thiosulfate as sulfur donor; NFS1 probably acting as a sulfur donor for thiocarboxylation reactions. This chain is Adenylyltransferase and sulfurtransferase MOCS3, found in Drosophila persimilis (Fruit fly).